The sequence spans 108 residues: Cell division protein FtsL (108 aa).

The Cytoplasmic portion of the chain corresponds to 1-24; the sequence is MSKDTASQPSLTKLIGLDIFGVGR. Residues 25–45 form a helical membrane-spanning segment; the sequence is LHAILLICIFLSAIGVVLATH. The Periplasmic portion of the chain corresponds to 46–108; sequence NTRQMTVQRE…PDKEVIIKLR (63 aa).

This sequence belongs to the FtsL family. As to quaternary structure, part of a complex composed of FtsB, FtsL and FtsQ.

The protein resides in the cell inner membrane. Its function is as follows. Essential cell division protein. May link together the upstream cell division proteins, which are predominantly cytoplasmic, with the downstream cell division proteins, which are predominantly periplasmic. The protein is Cell division protein FtsL of Aliivibrio fischeri (strain ATCC 700601 / ES114) (Vibrio fischeri).